The chain runs to 310 residues: Cytochrome f (310 aa).

The N-terminal stretch at 1-27 (MRRLLSPLFAALIVGVTVLTAPSTSWA) is a signal peptide. 4 residues coordinate heme: Tyr28, Cys48, Cys51, and His52. A helical membrane pass occupies residues 277 to 297 (IYGLLAFFAAVALAQIMLVLK).

This sequence belongs to the cytochrome f family. In terms of assembly, the 4 large subunits of the cytochrome b6-f complex are cytochrome b6, subunit IV (17 kDa polypeptide, PetD), cytochrome f and the Rieske protein, while the 4 small subunits are PetG, PetL, PetM and PetN. The complex functions as a dimer. It depends on heme as a cofactor.

It is found in the cellular thylakoid membrane. Functionally, component of the cytochrome b6-f complex, which mediates electron transfer between photosystem II (PSII) and photosystem I (PSI), cyclic electron flow around PSI, and state transitions. The protein is Cytochrome f of Synechococcus sp. (strain WH7803).